The chain runs to 223 residues: UPF0441 protein YgiB (223 aa).

Positions 178–195 are enriched in low complexity; the sequence is TVPKTAMAPKPATTTTVT. Positions 178 to 223 are disordered; it reads TVPKTAMAPKPATTTTVTRGGFGESVAKQSTMQRSAAGTSTRSMGG. The segment covering 204 to 223 has biased composition (polar residues); that stretch reads AKQSTMQRSAAGTSTRSMGG.

Belongs to the UPF0441 family.

The sequence is that of UPF0441 protein YgiB from Salmonella heidelberg (strain SL476).